The following is a 362-amino-acid chain: tRNA/tmRNA (uracil-C(5))-methyltransferase (362 aa).

Residues glutamine 186, tyrosine 214, asparagine 219, glutamate 235, and aspartate 295 each coordinate S-adenosyl-L-methionine. Catalysis depends on cysteine 320, which acts as the Nucleophile. Glutamate 354 functions as the Proton acceptor in the catalytic mechanism.

It belongs to the class I-like SAM-binding methyltransferase superfamily. RNA M5U methyltransferase family. TrmA subfamily.

It carries out the reaction uridine(54) in tRNA + S-adenosyl-L-methionine = 5-methyluridine(54) in tRNA + S-adenosyl-L-homocysteine + H(+). The catalysed reaction is uridine(341) in tmRNA + S-adenosyl-L-methionine = 5-methyluridine(341) in tmRNA + S-adenosyl-L-homocysteine + H(+). Dual-specificity methyltransferase that catalyzes the formation of 5-methyluridine at position 54 (m5U54) in all tRNAs, and that of position 341 (m5U341) in tmRNA (transfer-mRNA). This chain is tRNA/tmRNA (uracil-C(5))-methyltransferase, found in Ectopseudomonas mendocina (strain ymp) (Pseudomonas mendocina).